A 349-amino-acid polypeptide reads, in one-letter code: Protein disulfide isomerase Creld2 (349 aa).

Positions 1 to 22 (MHLLLAAGFGLLLLLLPPPAAS) are cleaved as a signal peptide. The CXXC signature appears at 28–31 (CQRC). 4 disulfide bridges follow: C28-C31, C137-C151, C145-C163, and C165-C174. Residues 133–175 (DCKECQGGSERPCSGNGYCSGDGSRQGDGSCQCHAGYKGPLCI) form the EGF-like 1 domain. A glycan (N-linked (GlcNAc...) asparagine) is linked at N187. Residues 190 to 237 (HSICLACDESCKTCSGPSNKDCVQCEVGWARVEDACVDVDECAAETPP) form an FU 1 repeat. The N-linked (GlcNAc...) asparagine glycan is linked to N248. Residues 250 to 297 (SYICEECDSTCVGCTGKGPANCKECIAGYTKQSGQCADIDECSLEEKA) form an FU 2 repeat. Residues 260-263 (CVGC) carry the CXXC motif. Disulfide bonds link C260–C263, C291–C305, C298–C314, and C316–C327. Positions 287 to 328 (DIDECSLEEKACKRRNENCYNVPGSFVCVCPDGFEETEDACV) constitute an EGF-like 2; calcium-binding domain.

Belongs to the CRELD family. In terms of assembly, interacts with Chrna4. Component of a complex containing at least Creld2, Manf, Matn3 and Pdia4. In terms of tissue distribution, broadly expressed in brain (at protein level).

It localises to the endoplasmic reticulum. It carries out the reaction Catalyzes the rearrangement of -S-S- bonds in proteins.. In terms of biological role, protein disulfide isomerase. Might play a role in the unfolded protein response. May regulate transport of alpha4-beta2 neuronal acetylcholine receptor. The chain is Protein disulfide isomerase Creld2 (Creld2) from Rattus norvegicus (Rat).